A 358-amino-acid chain; its full sequence is 3-isopropylmalate dehydrogenase (358 aa).

NAD(+) is bound at residue 77–90 (GPKWTNLPPDQQPE). Substrate contacts are provided by R98, R108, R137, and D226. Mg(2+) is bound by residues D226, D250, and D254. 284 to 296 (GSAPDIAGKGIAN) contributes to the NAD(+) binding site.

Belongs to the isocitrate and isopropylmalate dehydrogenases family. LeuB type 1 subfamily. Homodimer. It depends on Mg(2+) as a cofactor. The cofactor is Mn(2+).

The protein resides in the cytoplasm. The enzyme catalyses (2R,3S)-3-isopropylmalate + NAD(+) = 4-methyl-2-oxopentanoate + CO2 + NADH. It participates in amino-acid biosynthesis; L-leucine biosynthesis; L-leucine from 3-methyl-2-oxobutanoate: step 3/4. Its function is as follows. Catalyzes the oxidation of 3-carboxy-2-hydroxy-4-methylpentanoate (3-isopropylmalate) to 3-carboxy-4-methyl-2-oxopentanoate. The product decarboxylates to 4-methyl-2 oxopentanoate. This is 3-isopropylmalate dehydrogenase (leuB) from Haemophilus influenzae (strain ATCC 51907 / DSM 11121 / KW20 / Rd).